The following is a 292-amino-acid chain: Protein/nucleic acid deglycase HchA (292 aa).

Positions 1 to 12 (MSQDVNELSKQP) are enriched in polar residues. The disordered stretch occupies residues 1-23 (MSQDVNELSKQPTPDKAEDNAFF). The Nucleophile role is filled by cysteine 190.

It belongs to the peptidase C56 family. HchA subfamily.

It is found in the cytoplasm. It catalyses the reaction N(omega)-(1-hydroxy-2-oxopropyl)-L-arginyl-[protein] + H2O = lactate + L-arginyl-[protein] + H(+). The catalysed reaction is N(6)-(1-hydroxy-2-oxopropyl)-L-lysyl-[protein] + H2O = lactate + L-lysyl-[protein] + H(+). It carries out the reaction S-(1-hydroxy-2-oxopropyl)-L-cysteinyl-[protein] + H2O = lactate + L-cysteinyl-[protein] + H(+). The enzyme catalyses N(omega)-(1-hydroxy-2-oxoethyl)-L-arginyl-[protein] + H2O = L-arginyl-[protein] + glycolate + H(+). It catalyses the reaction N(6)-(1-hydroxy-2-oxoethyl)-L-lysyl-[protein] + H2O = glycolate + L-lysyl-[protein] + H(+). The catalysed reaction is S-(1-hydroxy-2-oxoethyl)-L-cysteinyl-[protein] + H2O = glycolate + L-cysteinyl-[protein] + H(+). It carries out the reaction N(2)-(1-hydroxy-2-oxopropyl)-dGTP + H2O = lactate + dGTP + H(+). The enzyme catalyses N(2)-(1-hydroxy-2-oxopropyl)-GTP + H2O = lactate + GTP + H(+). It catalyses the reaction N(2)-(1-hydroxy-2-oxopropyl)-GDP + H2O = lactate + GDP + H(+). The catalysed reaction is N(2)-(1-hydroxy-2-oxopropyl)-GMP + H2O = lactate + GMP + H(+). It carries out the reaction N(2)-(1-hydroxy-2-oxoethyl)-dGTP + H2O = dGTP + glycolate + H(+). The enzyme catalyses N(2)-(1-hydroxy-2-oxoethyl)-GTP + H2O = glycolate + GTP + H(+). It catalyses the reaction N(2)-(1-hydroxy-2-oxoethyl)-GDP + H2O = glycolate + GDP + H(+). The catalysed reaction is N(2)-(1-hydroxy-2-oxoethyl)-GMP + H2O = glycolate + GMP + H(+). It carries out the reaction an N(2)-(1-hydroxy-2-oxopropyl)-guanosine in RNA + H2O = a guanosine in RNA + lactate + H(+). The enzyme catalyses an N(2)-(1-hydroxy-2-oxopropyl)-2'-deoxyguanosine in DNA + H2O = a 2'-deoxyguanosine in DNA + lactate + H(+). It catalyses the reaction an N(2)-(1-hydroxy-2-oxoethyl)-guanosine in RNA + H2O = a guanosine in RNA + glycolate + H(+). The catalysed reaction is an N(2)-(1-hydroxy-2-oxoethyl)-2'-deoxyguanosine in DNA + H2O = a 2'-deoxyguanosine in DNA + glycolate + H(+). In terms of biological role, protein and nucleotide deglycase that catalyzes the deglycation of the Maillard adducts formed between amino groups of proteins or nucleotides and reactive carbonyl groups of glyoxals. Thus, functions as a protein deglycase that repairs methylglyoxal- and glyoxal-glycated proteins, and releases repaired proteins and lactate or glycolate, respectively. Deglycates cysteine, arginine and lysine residues in proteins, and thus reactivates these proteins by reversing glycation by glyoxals. Acts on early glycation intermediates (hemithioacetals and aminocarbinols), preventing the formation of Schiff bases and advanced glycation endproducts (AGE). Also functions as a nucleotide deglycase able to repair glycated guanine in the free nucleotide pool (GTP, GDP, GMP, dGTP) and in DNA and RNA. Is thus involved in a major nucleotide repair system named guanine glycation repair (GG repair), dedicated to reversing methylglyoxal and glyoxal damage via nucleotide sanitization and direct nucleic acid repair. Plays an important role in protecting cells from carbonyl stress. In Staphylococcus aureus (strain Mu3 / ATCC 700698), this protein is Protein/nucleic acid deglycase HchA.